Here is a 383-residue protein sequence, read N- to C-terminus: S-adenosylmethionine:tRNA ribosyltransferase-isomerase (383 aa).

The protein belongs to the QueA family. Monomer.

The protein resides in the cytoplasm. The catalysed reaction is 7-aminomethyl-7-carbaguanosine(34) in tRNA + S-adenosyl-L-methionine = epoxyqueuosine(34) in tRNA + adenine + L-methionine + 2 H(+). The protein operates within tRNA modification; tRNA-queuosine biosynthesis. Its function is as follows. Transfers and isomerizes the ribose moiety from AdoMet to the 7-aminomethyl group of 7-deazaguanine (preQ1-tRNA) to give epoxyqueuosine (oQ-tRNA). In Rickettsia prowazekii (strain Madrid E), this protein is S-adenosylmethionine:tRNA ribosyltransferase-isomerase.